Here is a 299-residue protein sequence, read N- to C-terminus: GTPase Era (299 aa).

The Era-type G domain occupies 2–170 (KTGFVALAGK…LDLIIENLPE (169 aa)). The segment at 10-17 (GKPNVGKS) is G1. 10-17 (GKPNVGKS) is a binding site for GTP. A G2 region spans residues 36-40 (QTTRN). A G3 region spans residues 57 to 60 (DTPG). GTP contacts are provided by residues 57–61 (DTPGI) and 119–122 (NKID). Residues 119 to 122 (NKID) form a G4 region. The interval 149-151 (TSA) is G5. The region spanning 201–278 (TYEEIPHSVA…FLDLHVKVKR (78 aa)) is the KH type-2 domain.

The protein belongs to the TRAFAC class TrmE-Era-EngA-EngB-Septin-like GTPase superfamily. Era GTPase family. Monomer.

Its subcellular location is the cytoplasm. The protein localises to the cell inner membrane. An essential GTPase that binds both GDP and GTP, with rapid nucleotide exchange. Plays a role in 16S rRNA processing and 30S ribosomal subunit biogenesis and possibly also in cell cycle regulation and energy metabolism. The protein is GTPase Era of Thermosipho melanesiensis (strain DSM 12029 / CIP 104789 / BI429).